The sequence spans 254 residues: MSFTVLIPARLASTRLPDKPLADIAGKPMVVRVAERAALSGAERVMIATDDARVQQAAADHGHAAILTRPDHPTGTDRLSEAVDALGLPDDAIVVNVQGDEPLIEPALIDAVAAQLVAAPHADIATCACPLADAEALFNPNVVKVVCAADRRALYFSRAPIPWARDALAGGARVLAPGLPAWHHIGIYAYRVAFLRRFPALSQGQLERYESLEQLRAMEHGHVIVVHHTDSAPAAGVDTPADLERARAAYTNRL.

It belongs to the KdsB family.

It localises to the cytoplasm. The enzyme catalyses 3-deoxy-alpha-D-manno-oct-2-ulosonate + CTP = CMP-3-deoxy-beta-D-manno-octulosonate + diphosphate. Its pathway is nucleotide-sugar biosynthesis; CMP-3-deoxy-D-manno-octulosonate biosynthesis; CMP-3-deoxy-D-manno-octulosonate from 3-deoxy-D-manno-octulosonate and CTP: step 1/1. The protein operates within bacterial outer membrane biogenesis; lipopolysaccharide biosynthesis. Its function is as follows. Activates KDO (a required 8-carbon sugar) for incorporation into bacterial lipopolysaccharide in Gram-negative bacteria. This chain is 3-deoxy-manno-octulosonate cytidylyltransferase, found in Bordetella parapertussis (strain 12822 / ATCC BAA-587 / NCTC 13253).